Consider the following 391-residue polypeptide: S-adenosylmethionine synthase (391 aa).

Residue histidine 14 participates in ATP binding. Aspartate 16 is a binding site for Mg(2+). K(+) is bound at residue glutamate 42. The L-methionine site is built by glutamate 55 and glutamine 98. The interval 98–108 is flexible loop; it reads QSVDIAIGVDE. ATP contacts are provided by residues 172-174, 238-239, aspartate 247, 253-254, alanine 270, and lysine 274; these read DGK, RF, and RK. Residue aspartate 247 coordinates L-methionine. Residue lysine 278 coordinates L-methionine.

Belongs to the AdoMet synthase family. Homotetramer; dimer of dimers. Requires Mg(2+) as cofactor. K(+) serves as cofactor.

Its subcellular location is the cytoplasm. The catalysed reaction is L-methionine + ATP + H2O = S-adenosyl-L-methionine + phosphate + diphosphate. Its pathway is amino-acid biosynthesis; S-adenosyl-L-methionine biosynthesis; S-adenosyl-L-methionine from L-methionine: step 1/1. In terms of biological role, catalyzes the formation of S-adenosylmethionine (AdoMet) from methionine and ATP. The overall synthetic reaction is composed of two sequential steps, AdoMet formation and the subsequent tripolyphosphate hydrolysis which occurs prior to release of AdoMet from the enzyme. The sequence is that of S-adenosylmethionine synthase from Clostridium botulinum (strain Okra / Type B1).